The primary structure comprises 249 residues: UPF0246 protein EUBREC_1226 (249 aa).

The protein belongs to the UPF0246 family.

The protein is UPF0246 protein EUBREC_1226 of Agathobacter rectalis (strain ATCC 33656 / DSM 3377 / JCM 17463 / KCTC 5835 / VPI 0990) (Eubacterium rectale).